Consider the following 856-residue polypeptide: Increased rDNA silencing protein 4 (856 aa).

3 disordered regions span residues 1-204 (MSAS…EPKS), 230-563 (KQEE…PTPE), and 589-672 (TSLE…DEDL). 3 stretches are compositionally biased toward low complexity: residues 12–42 (GPAS…ATLA), 67–84 (VPTP…RTVG), and 111–130 (SRVV…AGRT). Positions 152-162 (HVEERANDHAP) are enriched in basic and acidic residues. Residues 194-204 (ASAKPSSEPKS) are compositionally biased toward low complexity. The segment covering 239–254 (KKKKKKKPRPASKTQH) has biased composition (basic residues). Polar residues-rich tracts occupy residues 255 to 275 (HQTL…ENQC) and 303 to 315 (SLST…SSTG). Over residues 329–347 (GETRNRNGDVRDKPSREGG) the composition is skewed to basic and acidic residues. Composition is skewed to polar residues over residues 396-410 (PVSQ…TIIS), 451-468 (RVVS…QSAE), and 478-488 (RNSTSSDETFV). The segment covering 503–514 (KELERVRPRLDR) has biased composition (basic and acidic residues). Over residues 517–535 (TSTSSRASRVSTPASVRSP) the composition is skewed to low complexity. The span at 603–620 (RRGHRHHHLPHPHLRHRT) shows a compositional bias: basic residues. Positions 644 to 654 (PSRQTEHTQPA) are enriched in polar residues. Positions 743–832 (DSLGQVDLSR…EGVWESAMDR (90 aa)) constitute an EH domain.

Belongs to the IRS4 family.

Its function is as follows. Positive regulator of phosphatidylinositol 4,5-bisphosphate turnover and negatively regulates signaling through the cell integrity pathway. Involved in rDNA silencing. This is Increased rDNA silencing protein 4 (irs-4) from Neurospora crassa (strain ATCC 24698 / 74-OR23-1A / CBS 708.71 / DSM 1257 / FGSC 987).